We begin with the raw amino-acid sequence, 389 residues long: Aromatic-amino-acid aminotransferase 2 (389 aa).

N6-(pyridoxal phosphate)lysine is present on Lys233.

This sequence belongs to the class-I pyridoxal-phosphate-dependent aminotransferase family. In terms of assembly, homodimer. The cofactor is pyridoxal 5'-phosphate.

It carries out the reaction an aromatic L-alpha-amino acid + 2-oxoglutarate = an aromatic oxo-acid + L-glutamate. Catalyzes the transamination of phenylalanine, tyrosine and tryptophan. Shows virtually no activity towards aspartic acid, alanine, valine or isoleucine. This Thermococcus litoralis (strain ATCC 51850 / DSM 5473 / JCM 8560 / NS-C) protein is Aromatic-amino-acid aminotransferase 2.